A 189-amino-acid polypeptide reads, in one-letter code: Large ribosomal subunit protein uL5 (189 aa).

Belongs to the universal ribosomal protein uL5 family. Part of the 50S ribosomal subunit; part of the 5S rRNA/L5/L18/L25 subcomplex. Contacts the 5S rRNA and the P site tRNA. Forms a bridge to the 30S subunit in the 70S ribosome.

This is one of the proteins that bind and probably mediate the attachment of the 5S RNA into the large ribosomal subunit, where it forms part of the central protuberance. In the 70S ribosome it contacts protein S13 of the 30S subunit (bridge B1b), connecting the 2 subunits; this bridge is implicated in subunit movement. Contacts the P site tRNA; the 5S rRNA and some of its associated proteins might help stabilize positioning of ribosome-bound tRNAs. The polypeptide is Large ribosomal subunit protein uL5 (Kineococcus radiotolerans (strain ATCC BAA-149 / DSM 14245 / SRS30216)).